Reading from the N-terminus, the 376-residue chain is 5-amino-6-(D-ribitylamino)uracil--L-tyrosine 4-hydroxyphenyl transferase 1 (376 aa).

The region spanning 50 to 275 (VTYVVNRNIN…PGLEDLKVYA (226 aa)) is the Radical SAM core domain. [4Fe-4S] cluster-binding residues include cysteine 64, cysteine 68, and cysteine 71.

Belongs to the radical SAM superfamily. CofH family. In terms of assembly, consists of two subunits, CofG and CofH. It depends on [4Fe-4S] cluster as a cofactor.

The enzyme catalyses 5-amino-6-(D-ribitylamino)uracil + L-tyrosine + S-adenosyl-L-methionine = 5-amino-5-(4-hydroxybenzyl)-6-(D-ribitylimino)-5,6-dihydrouracil + 2-iminoacetate + 5'-deoxyadenosine + L-methionine + H(+). It functions in the pathway cofactor biosynthesis; coenzyme F0 biosynthesis. Its function is as follows. Catalyzes the radical-mediated synthesis of 5-amino-5-(4-hydroxybenzyl)-6-(D-ribitylimino)-5,6-dihydrouracil from 5-amino-6-(D-ribitylamino)uracil and L-tyrosine. The sequence is that of 5-amino-6-(D-ribitylamino)uracil--L-tyrosine 4-hydroxyphenyl transferase 1 from Methanosarcina mazei (strain ATCC BAA-159 / DSM 3647 / Goe1 / Go1 / JCM 11833 / OCM 88) (Methanosarcina frisia).